Consider the following 180-residue polypeptide: Ribulose bisphosphate carboxylase small subunit, chloroplastic 3 (180 aa).

The transit peptide at 1 to 56 (MASMISSSAVTTVSRASTVQSAAVAPFGGLKSMTGFPVKKVNTDITSITSNGGRVK) directs the protein to the chloroplast.

Belongs to the RuBisCO small chain family. In terms of assembly, heterohexadecamer of 8 large and 8 small subunits.

It localises to the plastid. It is found in the chloroplast. In terms of biological role, ruBisCO catalyzes two reactions: the carboxylation of D-ribulose 1,5-bisphosphate, the primary event in carbon dioxide fixation, as well as the oxidative fragmentation of the pentose substrate. Both reactions occur simultaneously and in competition at the same active site. Although the small subunit is not catalytic it is essential for maximal activity. Binds to abscisic acid (ABA); only half of the possible binding sites are occupied in the crystal; and there are indications this is a low affinity site. This is Ribulose bisphosphate carboxylase small subunit, chloroplastic 3 (RBCS.3A) from Pisum sativum (Garden pea).